Reading from the N-terminus, the 204-residue chain is MTNTIDFKHVEKNARIRDFENEKEKFKQDHNGINQEEVNQAMQVLSKATGGKEIFIGTKRSPQSKVKFAQFIQDNWDYALENAFFTDEEMLFLLRIQRFLQFKSNCIVNDIHSRNALPMSQKQIADRLKTDKSKISRIVNSLVQKGVIVKANGHKPEGVKARTYALFINPNIIYSGERDNVETTLKALFMNSKSLFKKFPIALF.

In terms of biological role, possibly involved in pGI2 replication mechanism. This is an uncharacterized protein from Bacillus thuringiensis.